Consider the following 364-residue polypeptide: MKTRVGVLYGGKSPEHQVSLSTARAVMNAIDPHKFDVIPIYITPEGQWIKGKRLTGTVEEVKQLQFTSTATAMIPVSLNQVPASGSATESDEETIDVIFPLLHGPNGEDGTVQGLLEMLNLPYVGNGVLASAVGMDKVVMKNLFAQAGLRQAKYVSVTKYEWKKGGEAVYDRIEQELGYPCFVKPANAGSSVGISKCKQRDDLKTAFAEAFKYDRKIIIEESIVGREIEIGVIGNDEPICSVAGEIVPKKEFYDYEAKYEDGQTELIIPANVTEEQYETIKSMAIAAFKALDLSGLARVDFFLAEDGTVYINEVNTMPGFTPYSMFPLLWQHSGVPYSELIERLIALALERHQEKQMITYTFEK.

The ATP-grasp domain occupies 141 to 346; the sequence is KNLFAQAGLR…YSELIERLIA (206 aa). Position 174–229 (174–229) interacts with ATP; the sequence is EQELGYPCFVKPANAGSSVGISKCKQRDDLKTAFAEAFKYDRKIIIEESIVGREIE. 3 residues coordinate Mg(2+): Asp-300, Glu-313, and Asn-315.

The protein belongs to the D-alanine--D-alanine ligase family. Mg(2+) serves as cofactor. Requires Mn(2+) as cofactor.

It is found in the cytoplasm. It carries out the reaction 2 D-alanine + ATP = D-alanyl-D-alanine + ADP + phosphate + H(+). Its pathway is cell wall biogenesis; peptidoglycan biosynthesis. Cell wall formation. This Geobacillus thermodenitrificans (strain NG80-2) protein is D-alanine--D-alanine ligase.